We begin with the raw amino-acid sequence, 336 residues long: DNA-directed RNA polymerase subunit alpha (336 aa).

Residues 1 to 235 (MIEFVIPKKL…HFKIVTEGLP (235 aa)) form an alpha N-terminal domain (alpha-NTD) region. An alpha C-terminal domain (alpha-CTD) region spans residues 264-336 (RENSDVYNRK…KFGLELRKGE (73 aa)).

This sequence belongs to the RNA polymerase alpha chain family. As to quaternary structure, homodimer. The RNAP catalytic core consists of 2 alpha, 1 beta, 1 beta' and 1 omega subunit. When a sigma factor is associated with the core the holoenzyme is formed, which can initiate transcription.

It catalyses the reaction RNA(n) + a ribonucleoside 5'-triphosphate = RNA(n+1) + diphosphate. Functionally, DNA-dependent RNA polymerase catalyzes the transcription of DNA into RNA using the four ribonucleoside triphosphates as substrates. This Thermotoga maritima (strain ATCC 43589 / DSM 3109 / JCM 10099 / NBRC 100826 / MSB8) protein is DNA-directed RNA polymerase subunit alpha.